A 287-amino-acid polypeptide reads, in one-letter code: 4-hydroxybenzoate octaprenyltransferase (287 aa).

Transmembrane regions (helical) follow at residues 41–61, 92–112, 133–153, 160–180, 197–217, and 267–287; these read VSLLVIFALGTILMRSAGCAI, VALAAGLSLVAFLLILPLNAL, FFAIPQAYLGIAFGFGIPMAF, VPLLAWVMLIANVFWSVAYDT, TSALTFGRFDVLAIMLCYAVT, and NNWLGGALFAGIAAHYAAQAF.

This sequence belongs to the UbiA prenyltransferase family. It depends on Mg(2+) as a cofactor.

Its subcellular location is the cell inner membrane. It catalyses the reaction all-trans-octaprenyl diphosphate + 4-hydroxybenzoate = 4-hydroxy-3-(all-trans-octaprenyl)benzoate + diphosphate. It functions in the pathway cofactor biosynthesis; ubiquinone biosynthesis. In terms of biological role, catalyzes the prenylation of para-hydroxybenzoate (PHB) with an all-trans polyprenyl group. Mediates the second step in the final reaction sequence of ubiquinone-8 (UQ-8) biosynthesis, which is the condensation of the polyisoprenoid side chain with PHB, generating the first membrane-bound Q intermediate 3-octaprenyl-4-hydroxybenzoate. This is 4-hydroxybenzoate octaprenyltransferase from Paraburkholderia phymatum (strain DSM 17167 / CIP 108236 / LMG 21445 / STM815) (Burkholderia phymatum).